We begin with the raw amino-acid sequence, 444 residues long: CRAL-TRIO domain-containing protein C3H8.02 (444 aa).

Ser40 is subject to Phosphoserine. Position 43 is a phosphothreonine (Thr43). Ser81 bears the Phosphoserine mark. The region spanning 171-330 is the CRAL-TRIO domain; it reads DDDFVRQLRI…EFGGPNPWRY (160 aa). Thr418 bears the Phosphothreonine mark.

This is CRAL-TRIO domain-containing protein C3H8.02 from Schizosaccharomyces pombe (strain 972 / ATCC 24843) (Fission yeast).